Reading from the N-terminus, the 285-residue chain is Inositol oxygenase (285 aa).

R29 is a binding site for substrate. At S33 the chain carries Phosphoserine. 85 to 88 serves as a coordination point for substrate; it reads DESD. Residues H98, H123, and D124 each contribute to the Fe cation site. Residues K127 and 141 to 142 contribute to the substrate site; that span reads GD. The Fe cation site is built by H194, H220, and D253. Position 220 to 221 (220 to 221) interacts with substrate; sequence HS.

It belongs to the myo-inositol oxygenase family. It depends on Fe cation as a cofactor. In terms of tissue distribution, kidney specific. Renal proximal tubules.

It is found in the cytoplasm. It catalyses the reaction myo-inositol + O2 = D-glucuronate + H2O + H(+). It participates in polyol metabolism; myo-inositol degradation into D-glucuronate; D-glucuronate from myo-inositol: step 1/1. The chain is Inositol oxygenase (Miox) from Mus musculus (Mouse).